A 766-amino-acid chain; its full sequence is Protein STB6 (766 aa).

The tract at residues valine 447–serine 469 is disordered. Position 514 is a phosphoserine (serine 514).

It to yeast STB2.

Its function is as follows. Binds to SIN3. The chain is Protein STB6 (STB6) from Saccharomyces cerevisiae (strain ATCC 204508 / S288c) (Baker's yeast).